A 186-amino-acid polypeptide reads, in one-letter code: ATP synthase subunit delta (186 aa).

Belongs to the ATPase delta chain family. F-type ATPases have 2 components, F(1) - the catalytic core - and F(0) - the membrane proton channel. F(1) has five subunits: alpha(3), beta(3), gamma(1), delta(1), epsilon(1). F(0) has three main subunits: a(1), b(2) and c(10-14). The alpha and beta chains form an alternating ring which encloses part of the gamma chain. F(1) is attached to F(0) by a central stalk formed by the gamma and epsilon chains, while a peripheral stalk is formed by the delta and b chains.

It localises to the cell inner membrane. Functionally, f(1)F(0) ATP synthase produces ATP from ADP in the presence of a proton or sodium gradient. F-type ATPases consist of two structural domains, F(1) containing the extramembraneous catalytic core and F(0) containing the membrane proton channel, linked together by a central stalk and a peripheral stalk. During catalysis, ATP synthesis in the catalytic domain of F(1) is coupled via a rotary mechanism of the central stalk subunits to proton translocation. Its function is as follows. This protein is part of the stalk that links CF(0) to CF(1). It either transmits conformational changes from CF(0) to CF(1) or is implicated in proton conduction. In Leptospira interrogans serogroup Icterohaemorrhagiae serovar copenhageni (strain Fiocruz L1-130), this protein is ATP synthase subunit delta.